Reading from the N-terminus, the 551-residue chain is Hydroxylamine reductase (551 aa).

The [2Fe-2S] cluster site is built by Cys3, Cys6, Cys18, and Cys25. Residues His249, Glu273, Cys317, Cys405, Cys433, Cys458, Glu492, and Lys494 each coordinate hybrid [4Fe-2O-2S] cluster. Cys405 is modified (cysteine persulfide).

Belongs to the HCP family. The cofactor is [2Fe-2S] cluster. Hybrid [4Fe-2O-2S] cluster is required as a cofactor.

Its subcellular location is the cytoplasm. It carries out the reaction A + NH4(+) + H2O = hydroxylamine + AH2 + H(+). Catalyzes the reduction of hydroxylamine to form NH(3) and H(2)O. In Edwardsiella ictaluri (strain 93-146), this protein is Hydroxylamine reductase.